Reading from the N-terminus, the 334-residue chain is Sensor protein BceS (334 aa).

Residues 1–12 (MIKAFLIERRSW) lie on the Cytoplasmic side of the membrane. The chain crosses the membrane as a helical span at residues 13 to 33 (IAAFLFQQALMLFIAFVDPSI). Residue S34 is a topological domain, extracellular. Residues 35–55 (FGNVLYMVYLCILFFIIFLWF) form a helical membrane-spanning segment. Residues 56-334 (RYRKETAFYK…RNQFEHVISV (279 aa)) are Cytoplasmic-facing. A Histidine kinase domain is found at 121–326 (AWIHEVKTPL…VFTLTFPIRN (206 aa)). At H124 the chain carries Phosphohistidine; by autocatalysis.

It localises to the cell membrane. It carries out the reaction ATP + protein L-histidine = ADP + protein N-phospho-L-histidine.. Member of the two-component regulatory system BceS/BceR involved in the regulation of bacitracin resistance. Activates BceR in response to extracellular bacitracin. The chain is Sensor protein BceS (bceS) from Bacillus subtilis (strain 168).